The chain runs to 287 residues: MFWRGGLPLVTIRNLLDNGVHFGHTTQRWNPKMKGFILTERCGSYILDMRETIRGIVTAVDFIRDTVARGGEVLFIGTKRQAQQVIFKQASRVGQHYIAHRWLGGLLTNFSTVSKSLVRMKELEEARLDDSVSTKKEQLIRGRELQKLRRSLGGIRNMTKLPALLWVVDTNREGIAVEEARKLGIPVVAILDSNCDPDLVQFPIPGNDDSIRSIELLTGIVADAVAQGLVERHKAPQDDIEPMAEWEKQLLQSGDSSGETRPISGTDRPLDGDLSKGPAPQDEELSD.

The disordered stretch occupies residues 233–287; it reads HKAPQDDIEPMAEWEKQLLQSGDSSGETRPISGTDRPLDGDLSKGPAPQDEELSD. The segment covering 250–259 has biased composition (polar residues); that stretch reads LLQSGDSSGE.

The protein belongs to the universal ribosomal protein uS2 family.

This chain is Small ribosomal subunit protein uS2, found in Tropheryma whipplei (strain TW08/27) (Whipple's bacillus).